The following is a 318-amino-acid chain: Lipoyl synthase 1 (318 aa).

The tract at residues 6–32 (DTISNPLRPRHPEKVNRPDSASPPKPD) is disordered. Residues C60, C65, C71, C86, C90, C93, and S299 each coordinate [4Fe-4S] cluster. Positions 72–288 (WDKKHATFMI…EKVAYTKGFL (217 aa)) constitute a Radical SAM core domain.

The protein belongs to the radical SAM superfamily. Lipoyl synthase family. Requires [4Fe-4S] cluster as cofactor.

Its subcellular location is the cytoplasm. It carries out the reaction [[Fe-S] cluster scaffold protein carrying a second [4Fe-4S](2+) cluster] + N(6)-octanoyl-L-lysyl-[protein] + 2 oxidized [2Fe-2S]-[ferredoxin] + 2 S-adenosyl-L-methionine + 4 H(+) = [[Fe-S] cluster scaffold protein] + N(6)-[(R)-dihydrolipoyl]-L-lysyl-[protein] + 4 Fe(3+) + 2 hydrogen sulfide + 2 5'-deoxyadenosine + 2 L-methionine + 2 reduced [2Fe-2S]-[ferredoxin]. It functions in the pathway protein modification; protein lipoylation via endogenous pathway; protein N(6)-(lipoyl)lysine from octanoyl-[acyl-carrier-protein]: step 2/2. Functionally, catalyzes the radical-mediated insertion of two sulfur atoms into the C-6 and C-8 positions of the octanoyl moiety bound to the lipoyl domains of lipoate-dependent enzymes, thereby converting the octanoylated domains into lipoylated derivatives. In Bradyrhizobium diazoefficiens (strain JCM 10833 / BCRC 13528 / IAM 13628 / NBRC 14792 / USDA 110), this protein is Lipoyl synthase 1.